The sequence spans 258 residues: UPF0246 protein Pnap_3166 (258 aa).

The protein belongs to the UPF0246 family.

The sequence is that of UPF0246 protein Pnap_3166 from Polaromonas naphthalenivorans (strain CJ2).